We begin with the raw amino-acid sequence, 404 residues long: Odorant receptor 74a (404 aa).

The Cytoplasmic segment spans residues 1–38 (MSFHRYRPRLPGGELAPMPWPVSLYRVLNHVAWPLEAE). Residues 39-59 (SGRWTVFLDRLMIFLGFLVFC) form a helical membrane-spanning segment. At 60-67 (EHNEVDFH) the chain is on the extracellular side. Residues 68–88 (YLIANRQDMDNMLTGLPTYLI) traverse the membrane as a helical segment. Over 89–141 (LVEMQIRCFQLAWHKDRFRALLQRFYAEIYVSEEMEPHLFASIQRQMLATRVN) the chain is Cytoplasmic. The helical transmembrane segment at 142-162 (STVYLLALLNFFLVPVTNVIY) threads the bilayer. Over 163–181 (HRREMLYKQVYPFDNTQLH) the chain is Extracellular. A helical membrane pass occupies residues 182-202 (FFIPLLVLNFWVGFIITSMLF). Residues 203 to 274 (GELNVMGELM…QRVEKEFTLR (72 aa)) are Cytoplasmic-facing. Residues 275–295 (IFVMFAFSAGLLCALFFKAFT) form a helical membrane-spanning segment. Topologically, residues 296–303 (NPWGNVAY) are extracellular. The helical transmembrane segment at 304-324 (IVWFLAKFMELLALGMLGSIL) threads the bilayer. At 325–380 (LKTTDELGMMYYTADWEQVIHQSDNVGENVKLMKLVTLAIQLNSRPFFITGLNYFR) the chain is on the cytoplasmic side. A helical transmembrane segment spans residues 381–401 (VSLTAVLKIIQGAFSYFTFLN). Over 402 to 404 (SMR) the chain is Extracellular.

The protein belongs to the insect chemoreceptor superfamily. Heteromeric odorant receptor channel (TC 1.A.69) family. Or1a subfamily. Interacts with Orco. Complexes exist early in the endomembrane system in olfactory sensory neurons (OSNs), coupling these complexes to the conserved ciliary trafficking pathway.

The protein localises to the cell membrane. In terms of biological role, odorant receptor which mediates acceptance or avoidance behavior, depending on its substrates. The odorant receptor repertoire encodes a large collection of odor stimuli that vary widely in identity, intensity, and duration. May form a complex with Orco to form odorant-sensing units, providing sensitive and prolonged odorant signaling and calcium permeability. Involved in the behavioral responses to octanol, anisole, and 2-heptanone. The chain is Odorant receptor 74a (Or74a) from Drosophila melanogaster (Fruit fly).